We begin with the raw amino-acid sequence, 60 residues long: Sec-independent protein translocase protein TatA (60 aa).

A helical membrane pass occupies residues 1 to 21 (MLSNIGVPGLILILVIALVIF).

It belongs to the TatA/E family. In terms of assembly, forms a complex with TatC.

It localises to the cell membrane. Its function is as follows. Part of the twin-arginine translocation (Tat) system that transports large folded proteins containing a characteristic twin-arginine motif in their signal peptide across membranes. TatA could form the protein-conducting channel of the Tat system. The protein is Sec-independent protein translocase protein TatA of Anoxybacillus flavithermus (strain DSM 21510 / WK1).